The primary structure comprises 202 residues: Holliday junction resolvase RecU (202 aa).

Residues Thr-85, Asp-87, Glu-100, and Gln-119 each contribute to the Mg(2+) site.

It belongs to the RecU family. The cofactor is Mg(2+).

Its subcellular location is the cytoplasm. It catalyses the reaction Endonucleolytic cleavage at a junction such as a reciprocal single-stranded crossover between two homologous DNA duplexes (Holliday junction).. Its function is as follows. Endonuclease that resolves Holliday junction intermediates in genetic recombination. Cleaves mobile four-strand junctions by introducing symmetrical nicks in paired strands. Promotes annealing of linear ssDNA with homologous dsDNA. Required for DNA repair, homologous recombination and chromosome segregation. The protein is Holliday junction resolvase RecU of Streptococcus uberis (strain ATCC BAA-854 / 0140J).